We begin with the raw amino-acid sequence, 488 residues long: Bifunctional protein HldE (488 aa).

Residues 1–327 (MDDTLAKLPR…GLAHGEHADP (327 aa)) form a ribokinase region. Residue 201-204 (NRRE) coordinates ATP. D272 is a catalytic residue. The cytidylyltransferase stretch occupies residues 354–488 (FTNGCFDLLH…GRMNAPAVGG (135 aa)).

It in the N-terminal section; belongs to the carbohydrate kinase PfkB family. In the C-terminal section; belongs to the cytidylyltransferase family. Homodimer.

The catalysed reaction is D-glycero-beta-D-manno-heptose 7-phosphate + ATP = D-glycero-beta-D-manno-heptose 1,7-bisphosphate + ADP + H(+). It carries out the reaction D-glycero-beta-D-manno-heptose 1-phosphate + ATP + H(+) = ADP-D-glycero-beta-D-manno-heptose + diphosphate. Its pathway is nucleotide-sugar biosynthesis; ADP-L-glycero-beta-D-manno-heptose biosynthesis; ADP-L-glycero-beta-D-manno-heptose from D-glycero-beta-D-manno-heptose 7-phosphate: step 1/4. The protein operates within nucleotide-sugar biosynthesis; ADP-L-glycero-beta-D-manno-heptose biosynthesis; ADP-L-glycero-beta-D-manno-heptose from D-glycero-beta-D-manno-heptose 7-phosphate: step 3/4. In terms of biological role, catalyzes the phosphorylation of D-glycero-D-manno-heptose 7-phosphate at the C-1 position to selectively form D-glycero-beta-D-manno-heptose-1,7-bisphosphate. Catalyzes the ADP transfer from ATP to D-glycero-beta-D-manno-heptose 1-phosphate, yielding ADP-D-glycero-beta-D-manno-heptose. The sequence is that of Bifunctional protein HldE from Caulobacter sp. (strain K31).